The following is a 306-amino-acid chain: N-acetylmuramic acid 6-phosphate etherase (306 aa).

The SIS domain occupies 55–218 (IVPRMKKGGR…STGVMIKLGK (164 aa)). Glu83 functions as the Proton donor in the catalytic mechanism. Glu114 is a catalytic residue.

It belongs to the GCKR-like family. MurNAc-6-P etherase subfamily. As to quaternary structure, homodimer.

It carries out the reaction N-acetyl-D-muramate 6-phosphate + H2O = N-acetyl-D-glucosamine 6-phosphate + (R)-lactate. It functions in the pathway amino-sugar metabolism; N-acetylmuramate degradation. Specifically catalyzes the cleavage of the D-lactyl ether substituent of MurNAc 6-phosphate, producing GlcNAc 6-phosphate and D-lactate. This Caldanaerobacter subterraneus subsp. tengcongensis (strain DSM 15242 / JCM 11007 / NBRC 100824 / MB4) (Thermoanaerobacter tengcongensis) protein is N-acetylmuramic acid 6-phosphate etherase.